Consider the following 418-residue polypeptide: Protein-lysine 6-oxidase (418 aa).

Residues 1–20 form the signal peptide; that stretch reads MRFAWTALLGSLQLCALVRC. Residues 21–169 constitute a propeptide, removed by BMP1; the sequence is APPAASHRQP…NRVEVDGMVG (149 aa). Positions 63–84 are disordered; sequence YQPQRRRDPGATAPGAANATAP. Positions 72 to 84 are enriched in low complexity; that stretch reads GATAPGAANATAP. Residues Asn-80, Asn-96, and Asn-143 are each glycosylated (N-linked (GlcNAc...) asparagine). Residues 130-175 are disordered; it reads TSGAHDAGTSRADNQTAPGEVPTLSNLRPPNRVEVDGMVGDDPYNP. A compositionally biased stretch (polar residues) spans 140–157; sequence RADNQTAPGEVPTLSNLR. Tyr-188 is subject to Sulfotyrosine. Residues 214–418 form a lysyl-oxidase like region; the sequence is PDLVPDPYYI…YASGCTISPY (205 aa). Cystine bridges form between Cys-239-Cys-245, Cys-292-Cys-341, Cys-325-Cys-331, Cys-352-Cys-362, and Cys-399-Cys-413. Residues His-293, His-295, and His-297 each contribute to the Cu cation site. Residues 321–356 constitute a cross-link (lysine tyrosylquinone (Lys-Tyr)); sequence KASFCLEDTSCDYGYHRRFACTAHTQGLSPGCYDTY. Tyr-356 carries the 2',4',5'-topaquinone modification.

The protein belongs to the lysyl oxidase family. As to quaternary structure, interacts with MFAP4. Interacts (via propeptide) with EFEMP2; this interaction is strong and facilitates formation of ternary complexes with ELN during elastic fiber assembly; this interaction limits interaction of EFEMP2 with FBLN5. Cu cation is required as a cofactor. Requires lysine tyrosylquinone residue as cofactor. The lysine tyrosylquinone cross-link (LTQ) is generated by condensation of the epsilon-amino group of a lysine with a topaquinone produced by oxidation of tyrosine. In terms of processing, proteolytically cleaved by BMP1 which removes the propeptide. Also proteolytically cleaved by ADAMTS2 and ADAMTS14, but not by ADAMTS3, at an additional cleavage site downstream of the BMP1 cleavage site. The propeptide plays a role in directing the deposition of this enzyme to elastic fibers, via interaction with tropoelastin. Cleavage by BMP1 to remove the propeptide does not increase enzymatic activity but increases binding to collagen. Cleavage by ADAMTS2 produces a form with reduced collagen-binding activity. Post-translationally, sulfated at Tyr-188 and also at either Tyr-184 or Tyr-185 which enhances binding to collagen.

Its subcellular location is the secreted. It is found in the extracellular space. The catalysed reaction is L-lysyl-[protein] + O2 + H2O = (S)-2-amino-6-oxohexanoyl-[protein] + H2O2 + NH4(+). Its function is as follows. Responsible for the post-translational oxidative deamination of peptidyl lysine residues in precursors to fibrous collagen and elastin. Regulator of Ras expression. May play a role in tumor suppression. Plays a role in the aortic wall architecture. The chain is Protein-lysine 6-oxidase from Bos taurus (Bovine).